The sequence spans 180 residues: Mitochondrial membrane protein FMP33 (180 aa).

3 helical membrane-spanning segments follow: residues 34–54 (LYTS…LYLE), 121–141 (FSIV…STLG), and 145–165 (ILYK…YMAL).

Its subcellular location is the mitochondrion membrane. The chain is Mitochondrial membrane protein FMP33 (FMP33) from Saccharomyces cerevisiae (strain ATCC 204508 / S288c) (Baker's yeast).